The primary structure comprises 432 residues: Dihydroorotase (432 aa).

Zn(2+) contacts are provided by His-60 and His-62. Residues 62–64 (HLR) and Asn-94 each bind substrate. Positions 152, 179, and 232 each coordinate Zn(2+). Asn-278 lines the substrate pocket. Position 305 (Asp-305) interacts with Zn(2+). Asp-305 is a catalytic residue. Substrate contacts are provided by residues His-309 and 323–324 (FG).

Belongs to the metallo-dependent hydrolases superfamily. DHOase family. Class I DHOase subfamily. It depends on Zn(2+) as a cofactor.

It carries out the reaction (S)-dihydroorotate + H2O = N-carbamoyl-L-aspartate + H(+). Its pathway is pyrimidine metabolism; UMP biosynthesis via de novo pathway; (S)-dihydroorotate from bicarbonate: step 3/3. Catalyzes the reversible cyclization of carbamoyl aspartate to dihydroorotate. This Elusimicrobium minutum (strain Pei191) protein is Dihydroorotase.